Here is a 327-residue protein sequence, read N- to C-terminus: DNA-directed RNA polymerase subunit alpha (327 aa).

An alpha N-terminal domain (alpha-NTD) region spans residues M1 to S231. Positions D247–K327 are alpha C-terminal domain (alpha-CTD).

It belongs to the RNA polymerase alpha chain family. In terms of assembly, homodimer. The RNAP catalytic core consists of 2 alpha, 1 beta, 1 beta' and 1 omega subunit. When a sigma factor is associated with the core the holoenzyme is formed, which can initiate transcription.

The enzyme catalyses RNA(n) + a ribonucleoside 5'-triphosphate = RNA(n+1) + diphosphate. Functionally, DNA-dependent RNA polymerase catalyzes the transcription of DNA into RNA using the four ribonucleoside triphosphates as substrates. This is DNA-directed RNA polymerase subunit alpha from Chlorobium chlorochromatii (strain CaD3).